The chain runs to 417 residues: NADH-quinone oxidoreductase subunit D (417 aa).

The protein belongs to the complex I 49 kDa subunit family. As to quaternary structure, NDH-1 is composed of 14 different subunits. Subunits NuoB, C, D, E, F, and G constitute the peripheral sector of the complex.

Its subcellular location is the cell inner membrane. The enzyme catalyses a quinone + NADH + 5 H(+)(in) = a quinol + NAD(+) + 4 H(+)(out). In terms of biological role, NDH-1 shuttles electrons from NADH, via FMN and iron-sulfur (Fe-S) centers, to quinones in the respiratory chain. The immediate electron acceptor for the enzyme in this species is believed to be ubiquinone. Couples the redox reaction to proton translocation (for every two electrons transferred, four hydrogen ions are translocated across the cytoplasmic membrane), and thus conserves the redox energy in a proton gradient. In Chromobacterium violaceum (strain ATCC 12472 / DSM 30191 / JCM 1249 / CCUG 213 / NBRC 12614 / NCIMB 9131 / NCTC 9757 / MK), this protein is NADH-quinone oxidoreductase subunit D.